The chain runs to 414 residues: S-adenosylmethionine synthase (414 aa).

His11 lines the ATP pocket. Asp13 provides a ligand contact to Mg(2+). K(+) is bound at residue Glu39. The L-methionine site is built by Glu52 and Gln95. Positions Gln95–Met105 are flexible loop. ATP contacts are provided by residues Asp169–Lys171, Lys245–Phe246, Asp254, Arg260–Lys261, Ala277, and Lys281. Asp254 contacts L-methionine. Lys285 provides a ligand contact to L-methionine.

It belongs to the AdoMet synthase family. Homotetramer; dimer of dimers. Requires Mg(2+) as cofactor. It depends on K(+) as a cofactor.

The protein localises to the cytoplasm. It carries out the reaction L-methionine + ATP + H2O = S-adenosyl-L-methionine + phosphate + diphosphate. It functions in the pathway amino-acid biosynthesis; S-adenosyl-L-methionine biosynthesis; S-adenosyl-L-methionine from L-methionine: step 1/1. Catalyzes the formation of S-adenosylmethionine (AdoMet) from methionine and ATP. The overall synthetic reaction is composed of two sequential steps, AdoMet formation and the subsequent tripolyphosphate hydrolysis which occurs prior to release of AdoMet from the enzyme. The polypeptide is S-adenosylmethionine synthase (Synechococcus sp. (strain JA-2-3B'a(2-13)) (Cyanobacteria bacterium Yellowstone B-Prime)).